Reading from the N-terminus, the 442-residue chain is 3-isopropylmalate dehydratase large subunit (442 aa).

[4Fe-4S] cluster is bound by residues Xaa347, Cys407, and Cys410.

Belongs to the aconitase/IPM isomerase family. LeuC type 1 subfamily. Heterodimer of LeuC and LeuD. The cofactor is [4Fe-4S] cluster.

The catalysed reaction is (2R,3S)-3-isopropylmalate = (2S)-2-isopropylmalate. Its pathway is amino-acid biosynthesis; L-leucine biosynthesis; L-leucine from 3-methyl-2-oxobutanoate: step 2/4. Catalyzes the isomerization between 2-isopropylmalate and 3-isopropylmalate, via the formation of 2-isopropylmaleate. In Buchnera aphidicola subsp. Macrosiphoniella ludovicianae, this protein is 3-isopropylmalate dehydratase large subunit.